The sequence spans 141 residues: uncharacterized protein (141 aa).

3 helical membrane-spanning segments follow: residues 32–52 (LIVL…TSII), 69–89 (IIAL…IAGF), and 109–129 (FTGY…PIAY).

The protein resides in the cell membrane. This is an uncharacterized protein from Methanocaldococcus jannaschii (strain ATCC 43067 / DSM 2661 / JAL-1 / JCM 10045 / NBRC 100440) (Methanococcus jannaschii).